The sequence spans 457 residues: ATP synthase subunit beta (457 aa).

147–154 (GGAGVGKT) provides a ligand contact to ATP.

The protein belongs to the ATPase alpha/beta chains family. In terms of assembly, F-type ATPases have 2 components, CF(1) - the catalytic core - and CF(0) - the membrane proton channel. CF(1) has five subunits: alpha(3), beta(3), gamma(1), delta(1), epsilon(1). CF(0) has three main subunits: a(1), b(2) and c(9-12). The alpha and beta chains form an alternating ring which encloses part of the gamma chain. CF(1) is attached to CF(0) by a central stalk formed by the gamma and epsilon chains, while a peripheral stalk is formed by the delta and b chains.

The protein resides in the cell inner membrane. The catalysed reaction is ATP + H2O + 4 H(+)(in) = ADP + phosphate + 5 H(+)(out). Produces ATP from ADP in the presence of a proton gradient across the membrane. The catalytic sites are hosted primarily by the beta subunits. The sequence is that of ATP synthase subunit beta from Actinobacillus pleuropneumoniae serotype 3 (strain JL03).